A 1045-amino-acid chain; its full sequence is Probable sucrose-phosphate synthase (1045 aa).

Basic and acidic residues-rich tracts occupy residues 93 to 115 (ENEEAQRKTKRRMELERGRREAT) and 124 to 137 (EGEKDISAHGDSTR). Disordered regions lie at residues 93–141 (ENEE…PRLP), 222–243 (WSYGEPTEMLNPRDSNGFDDDD), and 662–692 (IASSRQRQPQWQRSSDEGLDNQEPESPSDSL). A compositionally biased stretch (low complexity) spans 664–674 (SSRQRQPQWQR).

Belongs to the glycosyltransferase 1 family. Homodimer or homotetramer. In terms of tissue distribution, predominantly active in tap root.

It catalyses the reaction beta-D-fructose 6-phosphate + UDP-alpha-D-glucose = sucrose 6(F)-phosphate + UDP + H(+). It participates in glycan biosynthesis; sucrose biosynthesis; sucrose from D-fructose 6-phosphate and UDP-alpha-D-glucose: step 1/2. Activity is regulated by phosphorylation and moderated by concentration of metabolites and light. Plays a role in photosynthetic sucrose synthesis by catalyzing the rate-limiting step of sucrose biosynthesis from UDP-glucose and fructose- 6-phosphate. Involved in the regulation of carbon partitioning in the leaves of plants. May regulate the synthesis of sucrose and therefore play a major role as a limiting factor in the export of photoassimilates out of the leaf. Plays a role for sucrose availability that is essential for plant growth and fiber elongation. This chain is Probable sucrose-phosphate synthase (SPS), found in Beta vulgaris (Sugar beet).